A 174-amino-acid chain; its full sequence is Ribosome maturation factor RimM (174 aa).

The region spanning 98–172 (AGEYYYHQIV…VVTVELMEGL (75 aa)) is the PRC barrel domain.

It belongs to the RimM family. Binds ribosomal protein uS19.

Its subcellular location is the cytoplasm. In terms of biological role, an accessory protein needed during the final step in the assembly of 30S ribosomal subunit, possibly for assembly of the head region. Essential for efficient processing of 16S rRNA. May be needed both before and after RbfA during the maturation of 16S rRNA. It has affinity for free ribosomal 30S subunits but not for 70S ribosomes. This Lactiplantibacillus plantarum (strain ATCC BAA-793 / NCIMB 8826 / WCFS1) (Lactobacillus plantarum) protein is Ribosome maturation factor RimM.